Here is a 188-residue protein sequence, read N- to C-terminus: Ribosome maturation factor RimM (188 aa).

The PRC barrel domain maps to 96-169 (DDEFYYADLE…TLLIDPLAAG (74 aa)).

The protein belongs to the RimM family. As to quaternary structure, binds ribosomal protein uS19.

It is found in the cytoplasm. In terms of biological role, an accessory protein needed during the final step in the assembly of 30S ribosomal subunit, possibly for assembly of the head region. Essential for efficient processing of 16S rRNA. May be needed both before and after RbfA during the maturation of 16S rRNA. It has affinity for free ribosomal 30S subunits but not for 70S ribosomes. The chain is Ribosome maturation factor RimM from Rhizobium etli (strain ATCC 51251 / DSM 11541 / JCM 21823 / NBRC 15573 / CFN 42).